The following is a 367-amino-acid chain: Cytochrome b (367 aa).

A run of 4 helical transmembrane segments spans residues 25 to 45 (FGSM…FLAI), 69 to 90 (WIMQ…YIHI), 105 to 125 (WLSG…GYVL), and 170 to 190 (FFAL…IHII). Heme b contacts are provided by His-75 and His-89. Residues His-174 and His-188 each contribute to the heme b site. His-193 contributes to the a ubiquinone binding site. A run of 4 helical transmembrane segments spans residues 218–238 (YKDV…MSFT), 280–300 (LGGT…PFTH), 312–332 (LTQA…WTAT), and 339–358 (FIFI…IINP).

The protein belongs to the cytochrome b family. As to quaternary structure, the cytochrome bc1 complex contains 3 respiratory subunits (MT-CYB, CYC1 and UQCRFS1), 2 core proteins (UQCRC1 and UQCRC2) and probably 6 low-molecular weight proteins. The cofactor is heme b.

The protein localises to the mitochondrion inner membrane. Its function is as follows. Component of the ubiquinol-cytochrome c reductase complex (complex III or cytochrome b-c1 complex) that is part of the mitochondrial respiratory chain. The b-c1 complex mediates electron transfer from ubiquinol to cytochrome c. Contributes to the generation of a proton gradient across the mitochondrial membrane that is then used for ATP synthesis. This Austrelaps superbus (Lowland copperhead snake) protein is Cytochrome b (MT-CYB).